Here is a 486-residue protein sequence, read N- to C-terminus: Elastin-binding protein EbpS (486 aa).

The segment covering 1–40 (MSNNFKDDFEKNRQSIDTNSHQDHTEDVEKDQSELEHQDT) has biased composition (basic and acidic residues). Positions 1-314 (MSNNFKDDFE…HHDRDKERKK (314 aa)) are disordered. Over 2 to 204 (SNNFKDDFEK…ESKDHHSGKK (203 aa)) the chain is Extracellular. Residues 14–34 (QSIDTNSHQDHTEDVEKDQSE) form an elastin-binding region. A compositionally biased stretch (polar residues) spans 64-85 (TNHNKQVHNESQTSEDNVQNEA). 3 stretches are compositionally biased toward basic and acidic residues: residues 103–117 (EPSHQDSTPQHEEGY), 126–160 (DKSHPEPIEDNDKHETIKEAENNTEHSTVSDKSEA), and 180–199 (SKDKHDDVTVKQDKDESKDH). Residues 204–225 (KGAAIGAGTAGVAGAAGAMGVS) are compositionally biased toward low complexity. Residues 205–225 (GAAIGAGTAGVAGAAGAMGVS) traverse the membrane as a helical segment. Residues 226–319 (KAKKHSNDAQ…KERKKGGMAK (94 aa)) lie on the Cytoplasmic side of the membrane. The segment covering 233 to 246 (DAQNKSNSGKVNNS) has biased composition (polar residues). A compositionally biased stretch (basic and acidic residues) spans 247 to 259 (TEDKASEDKSKEH). The segment covering 278–297 (GAASNSASAASKPHASNNAS) has biased composition (low complexity). Over residues 300–314 (NDEHDHHDRDKERKK) the composition is skewed to basic and acidic residues. The chain crosses the membrane as a helical span at residues 320–340 (VLLPLIAAVLIIGALAIFGGM). Topologically, residues 341 to 486 (ALNNHNNGTK…IRNGQQIVIP (146 aa)) are extracellular. A disordered region spans residues 351–440 (ENKIANTNKN…QRQGGGQRHT (90 aa)). The span at 361–398 (NADESKDKDTSKDASKDKSKSTDSDKSKDDQDKATKDE) shows a compositional bias: basic and acidic residues. The segment covering 403–431 (QNNANQANNQAQNNQNQQQANQNQQQQQQ) has biased composition (low complexity). The LysM domain occupies 437–485 (QRHTVNGQENLYRIAIQYYGSGSPENVEKIRRANGLSGNNIRNGQQIVI).

Its subcellular location is the cell membrane. In terms of biological role, promotes binding of soluble elastin peptides and tropoelastin to S.aureus cells although it is not able to promote bacterial adherence to immobilized elastin and, therefore, is not a microbial surface component recognizing adhesive matrix molecule (MSCRAMM). The chain is Elastin-binding protein EbpS (ebpS) from Staphylococcus aureus (strain MRSA252).